The primary structure comprises 396 residues: MSGDKKSRSVIYKKTSRDKAVSVYLGKRDYVDHIESVDPVDGVVFVDPDLLKGKKVYVTLTCAFRYGNEDIDVIGLTFRKDLFFARIQVYPPVEDVKCLTKVQERLMKKLGNNAYPFVMAFPDYLPCSVSLQPAMSDVNKACGVDFEIKAFSASNLEDRYHKKNSVRLLIRKIQYAPDQPGPTPRAETSWQFFMSDKPLHLTASLAKEVFYHGETITVAVTVTNNSEKTVKKISTSVEQTANVVLYSSDFYTKTVAFDESDEKVSPKSTYKHTFTLLPLLAYNREKREIALDGKLKHEDTNLASSTLLKEGIDRTVMGILVDYKIKVTLTVSGLLGDMTSSEVSTELPFILMHPKPDSGAKESEQEEDFVFEDFARDHLKDELQPEEKEEEEEDEK.

Belongs to the arrestin family.

In terms of biological role, arrestin is one of the major proteins of the ros (retinal rod outer segments); it binds to photoactivated-phosphorylated rhodopsin, thereby apparently preventing the transducin-mediated activation of phosphodiesterase. The polypeptide is S-arrestin (Lithobates pipiens (Northern leopard frog)).